The sequence spans 449 residues: Exodeoxyribonuclease 7 large subunit (449 aa).

It belongs to the XseA family. In terms of assembly, heterooligomer composed of large and small subunits.

Its subcellular location is the cytoplasm. The catalysed reaction is Exonucleolytic cleavage in either 5'- to 3'- or 3'- to 5'-direction to yield nucleoside 5'-phosphates.. Its function is as follows. Bidirectionally degrades single-stranded DNA into large acid-insoluble oligonucleotides, which are then degraded further into small acid-soluble oligonucleotides. This Salmonella newport (strain SL254) protein is Exodeoxyribonuclease 7 large subunit.